The chain runs to 221 residues: MGQKVHPHGLRVGVIKGWDAKWYANKKDFADNLVEDNQIRKFVKKELFSAGISKIEIERAAKRVKLNIYTAKPGVVIGKGGSGIESLKKKLTNYISGKNILINIVEVKSVEAEAQLMAENIAAQLEKRISFRRAMKQTMQRAMRHGIKGVKTACSGRLGGAEIARTEHYHEGTIPLQTLRADIDYGFAEANTTYGKIGVKVWVYKGEVLPTKKVEKEEANA.

The KH type-2 domain occupies 39–108 (IRKFVKKELF…NILINIVEVK (70 aa)).

This sequence belongs to the universal ribosomal protein uS3 family. In terms of assembly, part of the 30S ribosomal subunit. Forms a tight complex with proteins S10 and S14.

Functionally, binds the lower part of the 30S subunit head. Binds mRNA in the 70S ribosome, positioning it for translation. This Clostridium botulinum (strain Alaska E43 / Type E3) protein is Small ribosomal subunit protein uS3.